Here is a 268-residue protein sequence, read N- to C-terminus: MKTNVDTGLIKELRSRTGAGFLACKRALLEENGDIESAIDNLRKSGKLTAEKKINNITNQGAIFSKIKNNIGVMLELNCETDFVSKDNLFICLGEDILVEALEKRIKDINQLKVIFESRRTELVSKVGENINIRRFHLIEGENIFSYLHGVRIGVLVSSSSLNKTILKNIAMHIAASKPEYLHPKNVSSEVFQREYQIQLELAKNLNKPSNLLKKIIDGRMEKFVNNISLTSQSFIMNPIKTVGDILNENHAHIESFIRFELGELVSK.

The tract at residues 81 to 84 (TDFV) is involved in Mg(2+) ion dislocation from EF-Tu.

It belongs to the EF-Ts family.

The protein resides in the cytoplasm. Its function is as follows. Associates with the EF-Tu.GDP complex and induces the exchange of GDP to GTP. It remains bound to the aminoacyl-tRNA.EF-Tu.GTP complex up to the GTP hydrolysis stage on the ribosome. The chain is Elongation factor Ts from Buchnera aphidicola subsp. Acyrthosiphon pisum (strain 5A).